We begin with the raw amino-acid sequence, 183 residues long: MTEMKILIVTLTYIEKSIIDEIVNNLSSYGLEVDILLDSRKYLPISAFNWERLQYDAEKVLSFLKSIHDFNYDSIIFLADSDGYIDGYNFVFGLTIDNFAIIFLHRLREEFYNRKPDLDLFMKRVVKEVTHEVGHTLGLSHCNTTGCVMNFSNSVEDVDKKQAKFCKNCAHKIEKLSKYLQQK.

His-131 serves as a coordination point for Zn(2+). Glu-132 functions as the Proton acceptor in the catalytic mechanism. The Zn(2+) site is built by His-135, His-141, Cys-142, Cys-147, and Cys-166.

This sequence belongs to the peptidase M54 family. In terms of assembly, monomer. The cofactor is Zn(2+).

Functionally, probable zinc metalloprotease whose natural substrate is unknown. The protein is Archaemetzincin of Saccharolobus solfataricus (strain ATCC 35092 / DSM 1617 / JCM 11322 / P2) (Sulfolobus solfataricus).